The sequence spans 156 residues: Flagellar assembly factor FliW (156 aa).

It belongs to the FliW family. Interacts with translational regulator CsrA and flagellin(s).

The protein resides in the cytoplasm. Functionally, acts as an anti-CsrA protein, binds CsrA and prevents it from repressing translation of its target genes, one of which is flagellin. Binds to flagellin and participates in the assembly of the flagellum. In Pseudothermotoga lettingae (strain ATCC BAA-301 / DSM 14385 / NBRC 107922 / TMO) (Thermotoga lettingae), this protein is Flagellar assembly factor FliW.